The primary structure comprises 193 residues: Corrinoid adenosyltransferase (193 aa).

Residues 10 to 18 (TRTGDDGTT), Lys28, 137 to 142 (RRAERS), and Asn163 each bind ATP.

It belongs to the Cob(I)alamin adenosyltransferase family.

It localises to the cytoplasm. It carries out the reaction 2 cob(II)yrinate a,c diamide + reduced [electron-transfer flavoprotein] + 2 ATP = 2 adenosylcob(III)yrinate a,c-diamide + 2 triphosphate + oxidized [electron-transfer flavoprotein] + 3 H(+). The catalysed reaction is 2 cob(II)alamin + reduced [electron-transfer flavoprotein] + 2 ATP = 2 adenosylcob(III)alamin + 2 triphosphate + oxidized [electron-transfer flavoprotein] + 3 H(+). Its pathway is cofactor biosynthesis; adenosylcobalamin biosynthesis; adenosylcobalamin from cob(II)yrinate a,c-diamide: step 2/7. The chain is Corrinoid adenosyltransferase from Mycobacterium bovis (strain ATCC BAA-935 / AF2122/97).